The sequence spans 138 residues: Nucleoside diphosphate kinase (138 aa).

Lys-9, Phe-57, Arg-85, Thr-91, Arg-102, and Asn-112 together coordinate ATP. The active-site Pros-phosphohistidine intermediate is His-120.

It belongs to the NDK family. In terms of assembly, homotetramer. Mg(2+) serves as cofactor.

It localises to the cytoplasm. It catalyses the reaction a 2'-deoxyribonucleoside 5'-diphosphate + ATP = a 2'-deoxyribonucleoside 5'-triphosphate + ADP. It carries out the reaction a ribonucleoside 5'-diphosphate + ATP = a ribonucleoside 5'-triphosphate + ADP. In terms of biological role, major role in the synthesis of nucleoside triphosphates other than ATP. The ATP gamma phosphate is transferred to the NDP beta phosphate via a ping-pong mechanism, using a phosphorylated active-site intermediate. This chain is Nucleoside diphosphate kinase, found in Streptococcus agalactiae serotype V (strain ATCC BAA-611 / 2603 V/R).